The chain runs to 486 residues: Transcription factor aptf-4 (486 aa).

2 disordered regions span residues Cys-25–Met-49 and Leu-150–Lys-173. Residues Leu-150–Cys-169 are compositionally biased toward polar residues. Positions Gln-301–Glu-430 are H-S-H (helix-span-helix), dimerization.

Belongs to the AP-2 family. In terms of assembly, binds DNA as a dimer.

It is found in the nucleus. Sequence-specific DNA-binding protein that interacts with enhancer elements to regulate transcription of selected genes. Required for neuroblast and epidermal morphogenesis, perhaps acting in cooperation with transcription factor aptf-2. This chain is Transcription factor aptf-4, found in Caenorhabditis elegans.